We begin with the raw amino-acid sequence, 807 residues long: Hyaluronate lyase (807 aa).

The N-terminal stretch at Met1–Ala40 is a signal peptide. Catalysis depends on residues Asn241, His297, and Tyr306.

Belongs to the polysaccharide lyase 8 family.

The protein resides in the secreted. It carries out the reaction [hyaluronan](n) = n 3-(4-deoxy-beta-D-gluc-4-enuronosyl)-N-acetyl-D-glucosamine + H2O. The sequence is that of Hyaluronate lyase from Staphylococcus aureus (strain NCTC 8325 / PS 47).